Here is a 288-residue protein sequence, read N- to C-terminus: NAD(P)H quinone oxidoreductase YCP4 (288 aa).

Residues 3 to 192 (IAIIQYSTYG…EIAEKQGEAF (190 aa)) form the Flavodoxin-like domain. FMN-binding positions include 9–13 (STYGH) and 110–164 (VFVS…SPYG). Residues 202-288 (GSKKTNTTTT…KSSCSKCIIM (87 aa)) are disordered. Positions 205-254 (KTNTTTTSKSAATSDAAGTTSGTAAGTSAATGAATGTSAPKESTKEASSS) are enriched in low complexity. Over residues 261 to 288 (NGTATRTQQSTKAPETAEKSSCSKCIIM) the composition is skewed to polar residues.

It belongs to the WrbA family. FMN is required as a cofactor.

Its subcellular location is the cell membrane. It carries out the reaction a quinone + NADH + H(+) = a quinol + NAD(+). The catalysed reaction is a quinone + NADPH + H(+) = a quinol + NADP(+). Flavodoxin-like protein (FLP) that plays a role in cell wall integrity, oxidative stress protection and virulence. FLPs act as NAD(P)H quinone oxidoreductases. Reduces ubiquinone (coenzyme Q), enabling it to serve as an antioxidant in the membrane. This Candida albicans (strain SC5314 / ATCC MYA-2876) (Yeast) protein is NAD(P)H quinone oxidoreductase YCP4.